The following is a 379-amino-acid chain: Queuine tRNA-ribosyltransferase (379 aa).

Asp95 acts as the Proton acceptor in catalysis. Substrate is bound by residues Asp95 to Phe99, Asp149, Gln197, and Gly224. The segment at Gly255–Glu261 is RNA binding. Asp274 serves as the catalytic Nucleophile. The Zn(2+) site is built by Cys312, Cys314, Cys317, and His343.

The protein belongs to the queuine tRNA-ribosyltransferase family. In terms of assembly, homodimer. Within each dimer, one monomer is responsible for RNA recognition and catalysis, while the other monomer binds to the replacement base PreQ1. Zn(2+) serves as cofactor.

The enzyme catalyses 7-aminomethyl-7-carbaguanine + guanosine(34) in tRNA = 7-aminomethyl-7-carbaguanosine(34) in tRNA + guanine. The protein operates within tRNA modification; tRNA-queuosine biosynthesis. Its function is as follows. Catalyzes the base-exchange of a guanine (G) residue with the queuine precursor 7-aminomethyl-7-deazaguanine (PreQ1) at position 34 (anticodon wobble position) in tRNAs with GU(N) anticodons (tRNA-Asp, -Asn, -His and -Tyr). Catalysis occurs through a double-displacement mechanism. The nucleophile active site attacks the C1' of nucleotide 34 to detach the guanine base from the RNA, forming a covalent enzyme-RNA intermediate. The proton acceptor active site deprotonates the incoming PreQ1, allowing a nucleophilic attack on the C1' of the ribose to form the product. After dissociation, two additional enzymatic reactions on the tRNA convert PreQ1 to queuine (Q), resulting in the hypermodified nucleoside queuosine (7-(((4,5-cis-dihydroxy-2-cyclopenten-1-yl)amino)methyl)-7-deazaguanosine). The protein is Queuine tRNA-ribosyltransferase of Solibacter usitatus (strain Ellin6076).